A 327-amino-acid chain; its full sequence is Malate dehydrogenase (327 aa).

11–17 (GAAGQIA) provides a ligand contact to NAD(+). Residues Arg92 and Arg98 each contribute to the substrate site. NAD(+) is bound by residues Asn105, Gln112, and 129-131 (VGN). Substrate contacts are provided by Asn131 and Arg162. The Proton acceptor role is filled by His187.

The protein belongs to the LDH/MDH superfamily. MDH type 2 family.

The enzyme catalyses (S)-malate + NAD(+) = oxaloacetate + NADH + H(+). In terms of biological role, catalyzes the reversible oxidation of malate to oxaloacetate. In Nitrosospira multiformis (strain ATCC 25196 / NCIMB 11849 / C 71), this protein is Malate dehydrogenase.